We begin with the raw amino-acid sequence, 100 residues long: Small ribosomal subunit protein uS14 (100 aa).

Belongs to the universal ribosomal protein uS14 family. In terms of assembly, part of the 30S ribosomal subunit. Contacts proteins S3 and S10.

In terms of biological role, binds 16S rRNA, required for the assembly of 30S particles and may also be responsible for determining the conformation of the 16S rRNA at the A site. The sequence is that of Small ribosomal subunit protein uS14 from Prochlorococcus marinus (strain MIT 9313).